We begin with the raw amino-acid sequence, 1023 residues long: MTLNNCASMKLEVHFQSKQNEDSEEEEQCTISSHWAFQQESKCWSPMGSSDLLAPPSPGLPATSSCESVLTELSATSLPVITVSLPPEPADLPLPGRAPSSSDRPLLSPTQGQEGPQDKAKKRHRNRSFLKHLESLRRKEKSGSQQAEPKHSPATSEKVSKASSFRSCRGFLSAGFYRAKNWAATSAGGSGANTRKAWEAWPVASFRHPQWTHRGDCLVHVPGDHKPGTFPRSLSIESLCPEDGHRLADWQPGRRWGCEGRRGSCGSTGSHASTYDNLPELYPAEPVMVGAEAEDEDDEESGGSYAHLDDILQHVWGLQQRVELWSRAMYPDLGPGDEEEEEATSSVEIATVEVKCQAEALSQMEVPAHGESPAWAQAEVQPAVLAPAQAPAEAEPVAQEEAEAPAPAPAPAPAQDSEQEAHSGGEPTFASSLSVEEGHSISDTVASSSELDSSGNSMNEAEAAGPLAGLQASMPRERRDSGVGASLTRPCRKLRWHSFQNSHRPSLNSESLEINRQFAGQINLLHKGSLLRLTAFMEKYTVPHKQGWVWSMPKFMRRNKTPDYRGQHVFGVPPLIHVQRTGQPLPQSIQQAMRYLRSQCLDQVGIFRKSGVKSRIQNLRQMNETSPDNVCYEGQSAYDVADLLKQYFRDLPEPIFTSKLTTTFLQIYQLLPKDQWLAAAQAATLLLPDENREVLQTLLYFLSDIASAEENQMTAGNLAVCLAPSIFHLNVSKKDSPSPRIKSKRSLIGRPGPRDLSDNMAATQGLSHMISDCKKLFQVPQDMVLQLCSSYSAAELSPPGPALAELRQAQAAGVSLSLYMEENIQDLLRDAAERFKGWMSVPGPQHTELACRKAPDGHPLRLWKASTEVAAPPAVVLHRVLRERALWDEDLLRAQVLEALMPGVELYHYVTDSMAPHPCRDFVVLRMWRSDLPRGGCLLVSQSLDPEQPVPESGVRALMLTSQYLMEPCGLGRSRLTHICRADLRGRSPDWYNKVFGHLCAMEVAKIRDSFPTLQAAGPETKL.

Disordered stretches follow at residues 46–67 (PMGS…SSCE) and 82–161 (TVSL…KVSK). Over residues 99–114 (PSSSDRPLLSPTQGQE) the composition is skewed to polar residues. A Phosphoserine modification is found at Ser-108. The segment covering 120 to 130 (AKKRHRNRSFL) has biased composition (basic residues). A compositionally biased stretch (polar residues) spans 143-161 (GSQQAEPKHSPATSEKVSK). Arg-169 carries the post-translational modification Asymmetric dimethylarginine. 2 positions are modified to phosphoserine: Ser-235 and Ser-238. Residues 387–397 (PAQAPAEAEPV) are compositionally biased toward low complexity. Disordered stretches follow at residues 387 to 461 (PAQA…MNEA) and 467 to 486 (LAGL…VGAS). The span at 441 to 459 (ISDTVASSSELDSSGNSMN) shows a compositional bias: polar residues. A phosphoserine mark is found at Ser-498 and Ser-506. A Rho-GAP domain is found at 573–777 (PPLIHVQRTG…HMISDCKKLF (205 aa)). Residues 733–757 (KKDSPSPRIKSKRSLIGRPGPRDLS) form a disordered region. One can recognise an START domain in the interval 809-1017 (AQAAGVSLSL…RDSFPTLQAA (209 aa)).

As to quaternary structure, binds both the SH2 and PTB domains of TNS1. In terms of tissue distribution, widely expressed with highest levels in kidney, lung and placenta.

The protein resides in the cell junction. The protein localises to the focal adhesion. Accelerates GTPase activity of RHOA and CDC42, but not RAC1. Stimulates the hydrolysis of phosphatidylinositol 4,5-bisphosphate by PLCD1. The sequence is that of StAR-related lipid transfer protein 8 (STARD8) from Homo sapiens (Human).